Consider the following 384-residue polypeptide: 4-hydroxy-3-methylbut-2-en-1-yl diphosphate synthase (flavodoxin) (384 aa).

[4Fe-4S] cluster-binding residues include cysteine 280, cysteine 283, cysteine 315, and glutamate 322.

This sequence belongs to the IspG family. The cofactor is [4Fe-4S] cluster.

The catalysed reaction is (2E)-4-hydroxy-3-methylbut-2-enyl diphosphate + oxidized [flavodoxin] + H2O + 2 H(+) = 2-C-methyl-D-erythritol 2,4-cyclic diphosphate + reduced [flavodoxin]. It participates in isoprenoid biosynthesis; isopentenyl diphosphate biosynthesis via DXP pathway; isopentenyl diphosphate from 1-deoxy-D-xylulose 5-phosphate: step 5/6. Its function is as follows. Converts 2C-methyl-D-erythritol 2,4-cyclodiphosphate (ME-2,4cPP) into 1-hydroxy-2-methyl-2-(E)-butenyl 4-diphosphate. This Frankia alni (strain DSM 45986 / CECT 9034 / ACN14a) protein is 4-hydroxy-3-methylbut-2-en-1-yl diphosphate synthase (flavodoxin).